Reading from the N-terminus, the 34-residue chain is Phalloidin proprotein (34 aa).

Positions 1–10 (MSDINASRLP) are excised as a propeptide. Residues 11–17 (AWLATCP) constitute a cross-link (cyclopeptide (Ala-Pro)). Positions 12–16 (WLATC) form a cross-link, 2'-cysteinyl-6'-hydroxytryptophan sulfoxide (Trp-Cys). Residues 18–34 (CVGDDVNPTLSRGESLC) constitute a propeptide that is removed on maturation.

It belongs to the MSDIN fungal toxin family. Processed by the macrocyclase-peptidase enzyme POPB to yield a toxic cyclic heptapeptide. POPB first removes 10 residues from the N-terminus. Conformational trapping of the remaining peptide forces the enzyme to release this intermediate rather than proceed to macrocyclization. The enzyme rebinds the remaining peptide in a different conformation and catalyzes macrocyclization of the N-terminal 7 residues.

In terms of biological role, toxin that belongs to the bicyclic heptapeptides called phallotoxins. Although structurally related to amatoxins, phallotoxins have a different mode of action, which is the stabilization of F-actin. Phallotoxins are poisonous when administered parenterally, but not orally because of poor absorption. This Amanita phalloides (Death cap) protein is Phalloidin proprotein.